A 68-amino-acid chain; its full sequence is ATP synthase F(0) complex subunit 8 (68 aa).

The chain crosses the membrane as a helical span at residues 8–24 (VWPTIITSMLLTLFLLM). Lys54 is subject to N6-acetyllysine; alternate. Residue Lys54 is modified to N6-succinyllysine; alternate. Lys57 bears the N6-acetyllysine mark.

The protein belongs to the ATPase protein 8 family. As to quaternary structure, component of the ATP synthase complex composed at least of ATP5F1A/subunit alpha, ATP5F1B/subunit beta, ATP5MC1/subunit c (homooctomer), MT-ATP6/subunit a, MT-ATP8/subunit 8, ATP5ME/subunit e, ATP5MF/subunit f, ATP5MG/subunit g, ATP5MK/subunit k, ATP5MJ/subunit j, ATP5F1C/subunit gamma, ATP5F1D/subunit delta, ATP5F1E/subunit epsilon, ATP5PF/subunit F6, ATP5PB/subunit b, ATP5PD/subunit d, ATP5PO/subunit OSCP. ATP synthase complex consists of a soluble F(1) head domain (subunits alpha(3) and beta(3)) - the catalytic core - and a membrane F(0) domain - the membrane proton channel (subunits c, a, 8, e, f, g, k and j). These two domains are linked by a central stalk (subunits gamma, delta, and epsilon) rotating inside the F1 region and a stationary peripheral stalk (subunits F6, b, d, and OSCP). Interacts with PRICKLE3.

It localises to the mitochondrion membrane. Its function is as follows. Subunit 8, of the mitochondrial membrane ATP synthase complex (F(1)F(0) ATP synthase or Complex V) that produces ATP from ADP in the presence of a proton gradient across the membrane which is generated by electron transport complexes of the respiratory chain. ATP synthase complex consist of a soluble F(1) head domain - the catalytic core - and a membrane F(1) domain - the membrane proton channel. These two domains are linked by a central stalk rotating inside the F(1) region and a stationary peripheral stalk. During catalysis, ATP synthesis in the catalytic domain of F(1) is coupled via a rotary mechanism of the central stalk subunits to proton translocation. In vivo, can only synthesize ATP although its ATP hydrolase activity can be activated artificially in vitro. Part of the complex F(0) domain. This chain is ATP synthase F(0) complex subunit 8, found in Symphalangus syndactylus (Siamang).